The chain runs to 1102 residues: Carbamoyl phosphate synthase large chain (1102 aa).

The segment at 1–402 (MPKRTDLKSV…ALQKALRSLE (402 aa)) is carboxyphosphate synthetic domain. Arginine 129, arginine 169, glycine 175, glycine 176, glutamate 208, isoleucine 210, glutamate 215, glycine 241, valine 242, histidine 243, glutamine 285, and glutamate 299 together coordinate ATP. The 196-residue stretch at 133-328 (KGVVERCGAE…IAKIATKLSL (196 aa)) folds into the ATP-grasp 1 domain. Glutamine 285, glutamate 299, and asparagine 301 together coordinate Mg(2+). Mn(2+) is bound by residues glutamine 285, glutamate 299, and asparagine 301. Residues 403 to 546 (QKGSQLDFSS…YHYSSYDEED (144 aa)) form an oligomerization domain region. The tract at residues 547–950 (EVGLHAKPSV…AFAKSQAAAN (404 aa)) is carbamoyl phosphate synthetic domain. Residues 677 to 868 (ARVLDEAGLT…MAKAAALIGT (192 aa)) enclose the ATP-grasp 2 domain. The ATP site is built by arginine 713, arginine 752, leucine 754, glutamate 759, glycine 784, isoleucine 785, histidine 786, serine 787, glutamine 827, and glutamate 839. Residues glutamine 827, glutamate 839, and asparagine 841 each contribute to the Mg(2+) site. Residues glutamine 827, glutamate 839, and asparagine 841 each contribute to the Mn(2+) site. Residues 951–1096 (NALPTEGKIF…QEHAANLSAA (146 aa)) enclose the MGS-like domain. Residues 951–1102 (NALPTEGKIF…LSAAMEAANA (152 aa)) form an allosteric domain region.

It belongs to the CarB family. Composed of two chains; the small (or glutamine) chain promotes the hydrolysis of glutamine to ammonia, which is used by the large (or ammonia) chain to synthesize carbamoyl phosphate. Tetramer of heterodimers (alpha,beta)4. It depends on Mg(2+) as a cofactor. Mn(2+) serves as cofactor.

It carries out the reaction hydrogencarbonate + L-glutamine + 2 ATP + H2O = carbamoyl phosphate + L-glutamate + 2 ADP + phosphate + 2 H(+). The enzyme catalyses hydrogencarbonate + NH4(+) + 2 ATP = carbamoyl phosphate + 2 ADP + phosphate + 2 H(+). The protein operates within amino-acid biosynthesis; L-arginine biosynthesis; carbamoyl phosphate from bicarbonate: step 1/1. Its pathway is pyrimidine metabolism; UMP biosynthesis via de novo pathway; (S)-dihydroorotate from bicarbonate: step 1/3. Large subunit of the glutamine-dependent carbamoyl phosphate synthetase (CPSase). CPSase catalyzes the formation of carbamoyl phosphate from the ammonia moiety of glutamine, carbonate, and phosphate donated by ATP, constituting the first step of 2 biosynthetic pathways, one leading to arginine and/or urea and the other to pyrimidine nucleotides. The large subunit (synthetase) binds the substrates ammonia (free or transferred from glutamine from the small subunit), hydrogencarbonate and ATP and carries out an ATP-coupled ligase reaction, activating hydrogencarbonate by forming carboxy phosphate which reacts with ammonia to form carbamoyl phosphate. This chain is Carbamoyl phosphate synthase large chain, found in Paenarthrobacter aurescens (strain TC1).